A 328-amino-acid polypeptide reads, in one-letter code: UPF0421 protein SSP0904 (328 aa).

4 consecutive transmembrane segments (helical) span residues 26–46, 61–81, 84–104, and 132–152; these read LFCL…IVTI, LPAT…FGDQ, FAYA…NLHV, and LLTA…ILPP.

This sequence belongs to the UPF0421 family.

It is found in the cell membrane. In Staphylococcus saprophyticus subsp. saprophyticus (strain ATCC 15305 / DSM 20229 / NCIMB 8711 / NCTC 7292 / S-41), this protein is UPF0421 protein SSP0904.